Here is a 225-residue protein sequence, read N- to C-terminus: Mitochondrial inner membrane protease ATP23 (225 aa).

H124 contacts a divalent metal cation. E125 is an active-site residue. H128 serves as a coordination point for a divalent metal cation.

It belongs to the peptidase M76 family.

It is found in the mitochondrion inner membrane. In terms of biological role, has a dual role in the assembly of mitochondrial ATPase. Acts as a protease that removes N-terminal residues of mitochondrial ATPase CF(0) subunit 6 at the intermembrane space side. Also involved in the correct assembly of the membrane-embedded ATPase CF(0) particle, probably mediating association of subunit 6 with the subunit 9 ring. The protein is Mitochondrial inner membrane protease ATP23 (ATP23) of Candida glabrata (strain ATCC 2001 / BCRC 20586 / JCM 3761 / NBRC 0622 / NRRL Y-65 / CBS 138) (Yeast).